The following is a 393-amino-acid chain: S-adenosylmethionine synthase 1 (393 aa).

Position 9 (E9) interacts with Mg(2+). H15 serves as a coordination point for ATP. E43 serves as a coordination point for K(+). L-methionine-binding residues include E56 and Q99. Residues 167–169 (DGK), 235–238 (SGRF), D246, 252–253 (RK), A269, K273, and K277 contribute to the ATP site. L-methionine is bound at residue D246. An L-methionine-binding site is contributed by K277.

The protein belongs to the AdoMet synthase family. Homotetramer. The cofactor is Mn(2+). Mg(2+) serves as cofactor. Co(2+) is required as a cofactor. It depends on K(+) as a cofactor.

The protein resides in the cytoplasm. It catalyses the reaction L-methionine + ATP + H2O = S-adenosyl-L-methionine + phosphate + diphosphate. Its pathway is amino-acid biosynthesis; S-adenosyl-L-methionine biosynthesis; S-adenosyl-L-methionine from L-methionine: step 1/1. Its function is as follows. Catalyzes the formation of S-adenosylmethionine from methionine and ATP. The reaction comprises two steps that are both catalyzed by the same enzyme: formation of S-adenosylmethionine (AdoMet) and triphosphate, and subsequent hydrolysis of the triphosphate. The sequence is that of S-adenosylmethionine synthase 1 (SAMS1) from Brassica juncea (Indian mustard).